The chain runs to 20 residues: Cytochrome c oxidase subunit 8B, mitochondrial (20 aa).

This sequence belongs to the cytochrome c oxidase VIII family. In terms of assembly, component of the cytochrome c oxidase (complex IV, CIV), a multisubunit enzyme composed of 14 subunits. The complex is composed of a catalytic core of 3 subunits MT-CO1, MT-CO2 and MT-CO3, encoded in the mitochondrial DNA, and 11 supernumerary subunits COX4I, COX5A, COX5B, COX6A, COX6B, COX6C, COX7A, COX7B, COX7C, COX8 and NDUFA4, which are encoded in the nuclear genome. The complex exists as a monomer or a dimer and forms supercomplexes (SCs) in the inner mitochondrial membrane with NADH-ubiquinone oxidoreductase (complex I, CI) and ubiquinol-cytochrome c oxidoreductase (cytochrome b-c1 complex, complex III, CIII), resulting in different assemblies (supercomplex SCI(1)III(2)IV(1) and megacomplex MCI(2)III(2)IV(2)).

It localises to the mitochondrion inner membrane. The protein operates within energy metabolism; oxidative phosphorylation. Component of the cytochrome c oxidase, the last enzyme in the mitochondrial electron transport chain which drives oxidative phosphorylation. The respiratory chain contains 3 multisubunit complexes succinate dehydrogenase (complex II, CII), ubiquinol-cytochrome c oxidoreductase (cytochrome b-c1 complex, complex III, CIII) and cytochrome c oxidase (complex IV, CIV), that cooperate to transfer electrons derived from NADH and succinate to molecular oxygen, creating an electrochemical gradient over the inner membrane that drives transmembrane transport and the ATP synthase. Cytochrome c oxidase is the component of the respiratory chain that catalyzes the reduction of oxygen to water. Electrons originating from reduced cytochrome c in the intermembrane space (IMS) are transferred via the dinuclear copper A center (CU(A)) of subunit 2 and heme A of subunit 1 to the active site in subunit 1, a binuclear center (BNC) formed by heme A3 and copper B (CU(B)). The BNC reduces molecular oxygen to 2 water molecules using 4 electrons from cytochrome c in the IMS and 4 protons from the mitochondrial matrix. The chain is Cytochrome c oxidase subunit 8B, mitochondrial from Thunnus obesus (Bigeye tuna).